Here is a 258-residue protein sequence, read N- to C-terminus: MVTMRDLLECGVHFGHQTRRWNPKMKKFIFGERKGIYIIDLQKTIRYFRYTYNIVRDAAAEGKTVLFVGTKKQAGVAIKEYAEKCGMPYVNHRWLGGMMTNFGTIKQSIRKLEVIEAMEEDGSINLLTKKEALMLRRKKEKLLATLGGIRNMKSLPDMVFVIDTVKEKIAVAEANKLRMPVVAPIDTNCDPDIVDFPIPGNDDAIRSVQLFCQEMAEAINEGKALRDQDEAEQVEPVSQEEKDEVVAEAMSEADFEEQ.

The tract at residues 222–258 (GKALRDQDEAEQVEPVSQEEKDEVVAEAMSEADFEEQ) is disordered.

The protein belongs to the universal ribosomal protein uS2 family.

This is Small ribosomal subunit protein uS2 from Campylobacter fetus subsp. fetus (strain 82-40).